The primary structure comprises 375 residues: Growth/differentiation factor 8 (375 aa).

A signal peptide spans Met1–Ala18. Positions Gly19–Arg266 are excised as a propeptide. 2 N-linked (GlcNAc...) asparagine glycosylation sites follow: Asn48 and Asn71. Disulfide bonds link Cys272-Cys282, Cys281-Cys340, Cys309-Cys372, and Cys313-Cys374.

This sequence belongs to the TGF-beta family. As to quaternary structure, homodimer; disulfide-linked. Interacts with WFIKKN2, leading to inhibit its activity. Interacts with FSTL3. Synthesized as large precursor molecule that undergoes proteolytic cleavage to generate an N-terminal propeptide and a disulfide linked C-terminal dimer, which is the biologically active molecule. The circulating form consists of a latent complex of the C-terminal dimer and other proteins, including its propeptide, which maintain the C-terminal dimer in a latent, inactive state. Ligand activation requires additional cleavage of the prodomain by a tolloid-like metalloproteinase.

It is found in the secreted. Its function is as follows. Acts specifically as a negative regulator of skeletal muscle growth. The polypeptide is Growth/differentiation factor 8 (MSTN) (Capra ibex (Ibex)).